Here is a 165-residue protein sequence, read N- to C-terminus: Transcriptional repressor NrdR (165 aa).

A zinc finger spans residues 3–34 (CPFCRHPDSRVVDSREADEGQAIRRRRSCPEC). The ATP-cone domain occupies 46 to 136 (LSVVKRSGVT…VYKSFSSAAD (91 aa)).

Belongs to the NrdR family. Requires Zn(2+) as cofactor.

Functionally, negatively regulates transcription of bacterial ribonucleotide reductase nrd genes and operons by binding to NrdR-boxes. The chain is Transcriptional repressor NrdR from Rhodococcus erythropolis (strain PR4 / NBRC 100887).